The following is a 390-amino-acid chain: Transforming growth factor beta-1 proprotein (390 aa).

The signal sequence occupies residues 1–29; that stretch reads MPPSGLRLLPLLLPLLWLLVLTPGRPAAG. A straightjacket domain region spans residues 30 to 74; that stretch reads LSTCKTIDMELVKRKRIEAIRGQILSKLRLASPPSQGEVPPGPLP. The segment at 75 to 271 is arm domain; that stretch reads EAVLALYNST…ATPLERAQQL (197 aa). N-linked (GlcNAc...) asparagine glycans are attached at residues N82, N136, and N176. The bowtie tail stretch occupies residues 226 to 252; the sequence is DSKDNTLRVGINGFSSSRRGDLATIDG. Residues 244 to 246 carry the Cell attachment site motif; sequence RGD. 4 disulfide bridges follow: C285–C294, C293–C356, C322–C387, and C326–C389.

It belongs to the TGF-beta family. Homodimer; disulfide-linked. Interacts with the serine proteases, HTRA1 and HTRA3: the interaction with either inhibits TGFB1-mediated signaling and the HTRA protease activity is required for this inhibition. May interact with THSD4; this interaction may lead to sequestration by FBN1 microfibril assembly and attenuation of TGFB signaling. Interacts with CD109, DPT and ASPN. Interacts with EFEMP2. Interacts with TSKU; the interaction contributes to regulation of the hair cycle. Interacts with TGFBR3. In terms of assembly, homodimer; disulfide-linked. Interacts with transforming growth factor beta-1 (TGF-beta-1) chain; interaction is non-covalent and maintains TGF-beta-1 in a latent state; each latency-associated peptide (LAP) monomer interacts with TGF-beta-1 in the other monomer. Interacts with LTBP1; leading to regulation of TGF-beta-1 activation. Interacts with LRRC32/GARP; leading to regulation of TGF-beta-1 activation on the surface of activated regulatory T-cells (Tregs). Interacts with LRRC33/NRROS; leading to regulation of TGF-beta-1 activation in macrophages and microglia. Interacts (via cell attachment site) with integrins ITGAV and ITGB6 (ITGAV:ITGB6), leading to release of the active TGF-beta-1. Latency-associated peptide: Interacts with NREP; the interaction results in a decrease in TGFB1 autoinduction. Interacts with HSP90AB1; inhibits latent TGFB1 activation. As to quaternary structure, homodimer; disulfide-linked. Interacts with TGF-beta receptors (TGFBR1 and TGFBR2), leading to signal transduction. Post-translationally, transforming growth factor beta-1 proprotein: The precursor proprotein is cleaved in the Golgi apparatus by FURIN to form Transforming growth factor beta-1 (TGF-beta-1) and Latency-associated peptide (LAP) chains, which remain non-covalently linked, rendering TGF-beta-1 inactive. N-glycosylated. Deglycosylation leads to activation of Transforming growth factor beta-1 (TGF-beta-1); mechanisms triggering deglycosylation-driven activation of TGF-beta-1 are however unclear.

The protein resides in the secreted. It localises to the extracellular space. Its subcellular location is the extracellular matrix. In terms of biological role, transforming growth factor beta-1 proprotein: Precursor of the Latency-associated peptide (LAP) and Transforming growth factor beta-1 (TGF-beta-1) chains, which constitute the regulatory and active subunit of TGF-beta-1, respectively. Functionally, required to maintain the Transforming growth factor beta-1 (TGF-beta-1) chain in a latent state during storage in extracellular matrix. Associates non-covalently with TGF-beta-1 and regulates its activation via interaction with 'milieu molecules', such as LTBP1, LRRC32/GARP and LRRC33/NRROS, that control activation of TGF-beta-1. Interaction with LRRC33/NRROS regulates activation of TGF-beta-1 in macrophages and microglia. Interaction with LRRC32/GARP controls activation of TGF-beta-1 on the surface of activated regulatory T-cells (Tregs). Interaction with integrins (ITGAV:ITGB6 or ITGAV:ITGB8) results in distortion of the Latency-associated peptide chain and subsequent release of the active TGF-beta-1. Multifunctional protein that regulates the growth and differentiation of various cell types and is involved in various processes, such as normal development, immune function, microglia function and responses to neurodegeneration. Activation into mature form follows different steps: following cleavage of the proprotein in the Golgi apparatus, Latency-associated peptide (LAP) and Transforming growth factor beta-1 (TGF-beta-1) chains remain non-covalently linked rendering TGF-beta-1 inactive during storage in extracellular matrix. At the same time, LAP chain interacts with 'milieu molecules', such as LTBP1, LRRC32/GARP and LRRC33/NRROS that control activation of TGF-beta-1 and maintain it in a latent state during storage in extracellular milieus. TGF-beta-1 is released from LAP by integrins (ITGAV:ITGB6 or ITGAV:ITGB8): integrin-binding to LAP stabilizes an alternative conformation of the LAP bowtie tail and results in distortion of the LAP chain and subsequent release of the active TGF-beta-1. Once activated following release of LAP, TGF-beta-1 acts by binding to TGF-beta receptors (TGFBR1 and TGFBR2), which transduce signal. While expressed by many cells types, TGF-beta-1 only has a very localized range of action within cell environment thanks to fine regulation of its activation by Latency-associated peptide chain (LAP) and 'milieu molecules'. Plays an important role in bone remodeling: acts as a potent stimulator of osteoblastic bone formation, causing chemotaxis, proliferation and differentiation in committed osteoblasts. Can promote either T-helper 17 cells (Th17) or regulatory T-cells (Treg) lineage differentiation in a concentration-dependent manner. At high concentrations, leads to FOXP3-mediated suppression of RORC and down-regulation of IL-17 expression, favoring Treg cell development. At low concentrations in concert with IL-6 and IL-21, leads to expression of the IL-17 and IL-23 receptors, favoring differentiation to Th17 cells. Stimulates sustained production of collagen through the activation of CREB3L1 by regulated intramembrane proteolysis (RIP). Mediates SMAD2/3 activation by inducing its phosphorylation and subsequent translocation to the nucleus. Positively regulates odontoblastic differentiation in dental papilla cells, via promotion of IPO7-mediated translocation of phosphorylated SMAD2 to the nucleus and subsequent transcription of target genes. Can induce epithelial-to-mesenchymal transition (EMT) and cell migration in various cell types. This is Transforming growth factor beta-1 proprotein (TGFB1) from Equus caballus (Horse).